A 672-amino-acid chain; its full sequence is Flap endonuclease 1 (672 aa).

Positions 1-106 (MGIKGLIGFL…QTLAKRKLLR (106 aa)) are N-domain. Asp34 contributes to the Mg(2+) binding site. Positions 47 and 72 each coordinate DNA. Positions 88, 160, 162, 181, and 183 each coordinate Mg(2+). Residues 124 to 252 (AIRKYVGRTV…KTAYNLIKKH (129 aa)) form an I-domain region. Glu160 lines the DNA pocket. DNA contacts are provided by Gly230 and Asp232. Asp232 is a binding site for Mg(2+). Residues 327–335 (TQLSLKSFF) are interaction with PCNA. Positions 361-436 (VESAVDSTSD…DAKKRNKRVP (76 aa)) are disordered. The span at 370 to 382 (DDGKDEVPSDDKV) shows a compositional bias: basic and acidic residues.

The protein belongs to the XPG/RAD2 endonuclease family. FEN1 subfamily. As to quaternary structure, interacts with PCNA. Three molecules of FEN1 bind to one PCNA trimer with each molecule binding to one PCNA monomer. PCNA stimulates the nuclease activity without altering cleavage specificity. It depends on Mg(2+) as a cofactor. Phosphorylated. Phosphorylation upon DNA damage induces relocalization to the nuclear plasma.

It is found in the nucleus. It localises to the nucleolus. Its subcellular location is the nucleoplasm. The protein localises to the mitochondrion. Functionally, structure-specific nuclease with 5'-flap endonuclease and 5'-3' exonuclease activities involved in DNA replication and repair. During DNA replication, cleaves the 5'-overhanging flap structure that is generated by displacement synthesis when DNA polymerase encounters the 5'-end of a downstream Okazaki fragment. It enters the flap from the 5'-end and then tracks to cleave the flap base, leaving a nick for ligation. Also involved in the long patch base excision repair (LP-BER) pathway, by cleaving within the apurinic/apyrimidinic (AP) site-terminated flap. Acts as a genome stabilization factor that prevents flaps from equilibrating into structures that lead to duplications and deletions. Also possesses 5'-3' exonuclease activity on nicked or gapped double-stranded DNA, and exhibits RNase H activity. Also involved in replication and repair of rDNA and in repairing mitochondrial DNA. This is Flap endonuclease 1 from Babesia bovis.